We begin with the raw amino-acid sequence, 548 residues long: Glucose-6-phosphate isomerase 1 (548 aa).

The active-site Proton donor is Glu353. Catalysis depends on residues His384 and Lys495.

This sequence belongs to the GPI family.

It is found in the cytoplasm. The enzyme catalyses alpha-D-glucose 6-phosphate = beta-D-fructose 6-phosphate. The protein operates within carbohydrate biosynthesis; gluconeogenesis. It participates in carbohydrate degradation; glycolysis; D-glyceraldehyde 3-phosphate and glycerone phosphate from D-glucose: step 2/4. Functionally, catalyzes the reversible isomerization of glucose-6-phosphate to fructose-6-phosphate. This Chromohalobacter salexigens (strain ATCC BAA-138 / DSM 3043 / CIP 106854 / NCIMB 13768 / 1H11) protein is Glucose-6-phosphate isomerase 1.